Consider the following 912-residue polypeptide: Androgen receptor (912 aa).

The tract at residues 1-550 is modulating; the sequence is MEVQLGLGRV…PIDYYFPPQK (550 aa). Positions 1–579 are interaction with ZNF318; it reads MEVQLGLGRV…GSCKVFFKRA (579 aa). 2 disordered regions span residues 35–156 and 204–236; these read QNPG…GPTF and QQQQEVVSEGGSSGRAREAAGAPTSSKDSYLGG. A Phosphoserine; by CDK9 modification is found at Ser69. The residue at position 82 (Ser82) is a Phosphoserine. Residues 204-213 are compositionally biased toward low complexity; sequence QQQQEVVSEG. The segment covering 226–236 has biased composition (polar residues); that stretch reads PTSSKDSYLGG. A Phosphotyrosine; by CSK modification is found at Tyr233. Ser266 is modified (phosphoserine). Tyr277 carries the post-translational modification Phosphotyrosine; by CSK and TNK2. Residues Tyr315, Tyr354, Tyr365, and Tyr370 each carry the phosphotyrosine; by CSK modification. Tyr371 carries the phosphotyrosine; by CSK and TNK2 modification. Residues 375 to 394 form a disordered region; the sequence is LSLAGPPPPPPSPHPHARIK. The segment covering 379–388 has biased composition (pro residues); it reads GPPPPPPSPH. A Glycyl lysine isopeptide (Lys-Gly) (interchain with G-Cter in SUMO) cross-link involves residue Lys394. Tyr401 bears the Phosphotyrosine; by CSK mark. A disordered region spans residues 452-490; the sequence is LYGPCGGSGGGGTGESVSVTPYGYTRPQQGLTGQEGDFP. Residues 455–465 are compositionally biased toward gly residues; that stretch reads PCGGSGGGGTG. Lys513 participates in a covalent cross-link: Glycyl lysine isopeptide (Lys-Gly) (interchain with G-Cter in SUMO). 2 positions are modified to phosphotyrosine; by CSK: Tyr527 and Tyr544. The tract at residues 544-911 is interaction with LPXN; it reads YYFPPQKTCL…GKVKPIYFHT (368 aa). Residues 551-624 constitute a DNA-binding region (nuclear receptor); it reads TCLICGDEAS…AGMTLGARRL (74 aa). 2 consecutive NR C4-type zinc fingers follow at residues 552–572 and 588–612; these read CLICGDEASGCHYGALTCGSC and CASRNDCTIDKFRRKNCPPCRLRKC. The segment at 564 to 654 is interaction with HIPK3; sequence YGALTCGSCK…TEETTQKLTV (91 aa). The tract at residues 584 to 911 is interaction with CCAR1; it reads QKYLCASRND…GKVKPIYFHT (328 aa). An interaction with KAT7 region spans residues 617–911; the sequence is MTLGARRLKK…GKVKPIYFHT (295 aa). Phosphoserine; by STK4/MST1 is present on Ser643. One can recognise an NR LBD domain in the interval 661–892; the sequence is ECQPIFLNVL…DFPEMMAEII (232 aa). Positions 698 and 745 each coordinate 17beta-hydroxy-5alpha-androstan-3-one. Residues Lys838 and Lys840 each participate in a glycyl lysine isopeptide (Lys-Gly) (interchain with G-Cter in ubiquitin) cross-link. Thr870 provides a ligand contact to 17beta-hydroxy-5alpha-androstan-3-one. Residue Tyr908 is modified to Phosphotyrosine; by CSK.

This sequence belongs to the nuclear hormone receptor family. NR3 subfamily. In terms of assembly, binds DNA as a homodimer. Part of a ternary complex containing AR, EFCAB6/DJBP and PARK7. Interacts with HIPK3 and NR0B2 in the presence of androgen. The ligand binding domain interacts with KAT7/HBO1 in the presence of dihydrotestosterone. Interacts with EFCAB6/DJBP, PQBP1, RANBP9, RBAK, SPDEF, SRA1, TGFB1I1 and RREB1. Interacts with ZMIZ1/ZIMP10 and ZMIZ2/ZMIP7 which both enhance its transactivation activity. Interacts with SLC30A9 and RAD54L2/ARIP4. Interacts with MACROD1 (via macro domain). Interacts via the ligand-binding domain with LXXLL and FXXLF motifs from NCOA1, NCOA2, NCOA3 and MAGEA11. Interacts (via nuclear receptor DNA binding domain and nuclear receptor ligand binding domain) with NCOA4. The AR N-terminal poly-Gln region binds Ran resulting in enhancement of AR-mediated transactivation. Ran-binding decreases as the poly-Gln length increases. Interacts with HIP1 (via coiled coil domain). Interacts (via ligand-binding domain) with TRIM68. Interacts with TNK2. Interacts with USP26. Interacts with RNF6. Interacts (regulated by RNF6 probably through polyubiquitination) with RNF14; regulates AR transcriptional activity. Interacts with PRMT2 and TRIM24. Interacts with RACK1. Interacts with RANBP10; this interaction enhances dihydrotestosterone-induced AR transcriptional activity. Interacts with PRPF6 in a hormone-independent way; this interaction enhances dihydrotestosterone-induced AR transcriptional activity. Interacts with STK4/MST1. Interacts with ZIPK/DAPK3. Interacts with LPXN. Interacts with MAK. Part of a complex containing AR, MAK and NCOA3. Interacts with CRY1. Interacts with CCAR1 and GATA2. Interacts with ZNF318. Interacts with BUD31. Interacts with ARID4A. Interacts with ARID4B. Interacts (via NR LBD domain) with ZBTB7A; the interaction is direct and androgen-dependent. Interacts with NCOR1. Interacts with NCOR2. Interacts with CRY2 in a ligand-dependent manner. In terms of processing, phosphorylation by TNK2 enhances the DNA-binding and transcriptional activity. Phosphorylation at Ser-69 by CDK9 regulates AR promoter selectivity and cell growth. Post-translationally, sumoylated on Lys-394 (major) and Lys-513. Ubiquitinated. Deubiquitinated by USP26. 'Lys-6' and 'Lys-27'-linked polyubiquitination by RNF6 modulates AR transcriptional activity and specificity. Palmitoylated by ZDHHC7 and ZDHHC21. Palmitoylation is required for plasma membrane targeting and for rapid intracellular signaling via ERK and AKT kinases and cAMP generation.

It localises to the nucleus. The protein localises to the cytoplasm. Its function is as follows. Steroid hormone receptors are ligand-activated transcription factors that regulate eukaryotic gene expression and affect cellular proliferation and differentiation in target tissues. Transcription factor activity is modulated by bound coactivator and corepressor proteins like ZBTB7A that recruits NCOR1 and NCOR2 to the androgen response elements/ARE on target genes, negatively regulating androgen receptor signaling and androgen-induced cell proliferation. Transcription activation is also down-regulated by NR0B2. Activated, but not phosphorylated, by HIPK3 and ZIPK/DAPK3. The protein is Androgen receptor (AR) of Crocuta crocuta (Spotted hyena).